The chain runs to 24 residues: Large ribosomal subunit protein uL30 (24 aa).

Belongs to the universal ribosomal protein uL30 family. In terms of assembly, part of the 50S ribosomal subunit.

The protein is Large ribosomal subunit protein uL30 (rpmD) of Ectopseudomonas mendocina (Pseudomonas mendocina).